The following is a 37-amino-acid chain: MKVRASVKEMCDKCRVIRRNGRVMVICTNPKHKQRQG.

Belongs to the bacterial ribosomal protein bL36 family.

It localises to the plastid. It is found in the organellar chromatophore. The polypeptide is Large ribosomal subunit protein bL36c (Paulinella chromatophora).